Reading from the N-terminus, the 37-residue chain is Potassium channel toxin alpha-KTx 1.4 (37 aa).

3 disulfide bridges follow: cysteine 7–cysteine 28, cysteine 13–cysteine 33, and cysteine 17–cysteine 35.

The protein belongs to the short scorpion toxin superfamily. Potassium channel inhibitor family. Alpha-KTx 01 subfamily. As to expression, expressed by the venom gland.

The protein resides in the secreted. Blocks selectively the high conductance calcium-activated (maxi-K) potassium channels. In Centruroides limbatus (Bark scorpion), this protein is Potassium channel toxin alpha-KTx 1.4.